The chain runs to 415 residues: Gamma-glutamyl phosphate reductase (415 aa).

The protein belongs to the gamma-glutamyl phosphate reductase family.

It localises to the cytoplasm. It catalyses the reaction L-glutamate 5-semialdehyde + phosphate + NADP(+) = L-glutamyl 5-phosphate + NADPH + H(+). Its pathway is amino-acid biosynthesis; L-proline biosynthesis; L-glutamate 5-semialdehyde from L-glutamate: step 2/2. In terms of biological role, catalyzes the NADPH-dependent reduction of L-glutamate 5-phosphate into L-glutamate 5-semialdehyde and phosphate. The product spontaneously undergoes cyclization to form 1-pyrroline-5-carboxylate. The polypeptide is Gamma-glutamyl phosphate reductase (Mycobacterium sp. (strain JLS)).